The sequence spans 293 residues: Elongation factor Ts (293 aa).

The segment at 79 to 82 (TDFV) is involved in Mg(2+) ion dislocation from EF-Tu.

This sequence belongs to the EF-Ts family.

The protein resides in the cytoplasm. In terms of biological role, associates with the EF-Tu.GDP complex and induces the exchange of GDP to GTP. It remains bound to the aminoacyl-tRNA.EF-Tu.GTP complex up to the GTP hydrolysis stage on the ribosome. The sequence is that of Elongation factor Ts from Macrococcus caseolyticus (strain JCSC5402) (Macrococcoides caseolyticum).